An 874-amino-acid chain; its full sequence is Alanine--tRNA ligase (874 aa).

Zn(2+) contacts are provided by histidine 562, histidine 566, cysteine 664, and histidine 668.

This sequence belongs to the class-II aminoacyl-tRNA synthetase family. It depends on Zn(2+) as a cofactor.

It is found in the cytoplasm. The catalysed reaction is tRNA(Ala) + L-alanine + ATP = L-alanyl-tRNA(Ala) + AMP + diphosphate. Functionally, catalyzes the attachment of alanine to tRNA(Ala) in a two-step reaction: alanine is first activated by ATP to form Ala-AMP and then transferred to the acceptor end of tRNA(Ala). Also edits incorrectly charged Ser-tRNA(Ala) and Gly-tRNA(Ala) via its editing domain. The chain is Alanine--tRNA ligase from Shewanella denitrificans (strain OS217 / ATCC BAA-1090 / DSM 15013).